The primary structure comprises 326 residues: MSTFEKINKVSVVIPVYNEEESLPQLLERTIKSCKQLEQEYELILVDDGSSDNSAKMLEEAANIEDNHVIAIILNRNYGQHSAIMAGFNQADGDLVITLDADLQNPPEEIPRLVATAEEGYDVVGTRRRNRQDSWFRKTASKMINAMITKATGRSMGDYGCMLRAYRRHIIDAMLQCHERSTFIPILANTFARRTIEIEVAHAEREYGDSKYSFLKLINLMYDLLTCLTTAPLRLLSVVGSVIAVAGFLLAVLLIVLRLIFGAIWAADGVFTLFAILFMFIGAQFVAMGLLGEYIGRIYNDVRARPRYFIQKVVGVKKPNKNQEED.

The next 2 helical transmembrane spans lie at 236 to 256 (LSVVGSVIAVAGFLLAVLLIV) and 270 to 290 (VFTLFAILFMFIGAQFVAMGL).

This sequence belongs to the glycosyltransferase 2 family.

The protein resides in the cell inner membrane. The catalysed reaction is UDP-4-deoxy-4-formamido-beta-L-arabinose + di-trans,octa-cis-undecaprenyl phosphate = 4-deoxy-4-formamido-alpha-L-arabinopyranosyl di-trans,octa-cis-undecaprenyl phosphate + UDP. Its pathway is glycolipid biosynthesis; 4-amino-4-deoxy-alpha-L-arabinose undecaprenyl phosphate biosynthesis; 4-amino-4-deoxy-alpha-L-arabinose undecaprenyl phosphate from UDP-4-deoxy-4-formamido-beta-L-arabinose and undecaprenyl phosphate: step 1/2. It functions in the pathway bacterial outer membrane biogenesis; lipopolysaccharide biosynthesis. Its function is as follows. Catalyzes the transfer of 4-deoxy-4-formamido-L-arabinose from UDP to undecaprenyl phosphate. The modified arabinose is attached to lipid A and is required for resistance to polymyxin and cationic antimicrobial peptides. The polypeptide is Undecaprenyl-phosphate 4-deoxy-4-formamido-L-arabinose transferase (Proteus mirabilis (strain HI4320)).